The primary structure comprises 361 residues: Phospho-N-acetylmuramoyl-pentapeptide-transferase (361 aa).

10 helical membrane passes run 28–48 (LAAL…IRSL), 73–93 (TMGG…WADL), 97–117 (YIWL…VDDY), 134–154 (FFWQ…TAEL), 168–188 (VAIP…IVGS), 200–220 (GLAI…AYVA), 237–257 (AGEL…FLWF), 264–284 (VFMG…ITVI), 289–309 (IVLV…MIQV), and 338–358 (QVVV…LSTL).

Belongs to the glycosyltransferase 4 family. MraY subfamily. The cofactor is Mg(2+).

It localises to the cell inner membrane. It catalyses the reaction UDP-N-acetyl-alpha-D-muramoyl-L-alanyl-gamma-D-glutamyl-meso-2,6-diaminopimeloyl-D-alanyl-D-alanine + di-trans,octa-cis-undecaprenyl phosphate = di-trans,octa-cis-undecaprenyl diphospho-N-acetyl-alpha-D-muramoyl-L-alanyl-D-glutamyl-meso-2,6-diaminopimeloyl-D-alanyl-D-alanine + UMP. The protein operates within cell wall biogenesis; peptidoglycan biosynthesis. Catalyzes the initial step of the lipid cycle reactions in the biosynthesis of the cell wall peptidoglycan: transfers peptidoglycan precursor phospho-MurNAc-pentapeptide from UDP-MurNAc-pentapeptide onto the lipid carrier undecaprenyl phosphate, yielding undecaprenyl-pyrophosphoryl-MurNAc-pentapeptide, known as lipid I. The chain is Phospho-N-acetylmuramoyl-pentapeptide-transferase from Nitrosomonas eutropha (strain DSM 101675 / C91 / Nm57).